The sequence spans 554 residues: Glucose-6-phosphate isomerase (554 aa).

Catalysis depends on glutamate 359, which acts as the Proton donor. Active-site residues include histidine 390 and lysine 518.

This sequence belongs to the GPI family.

The protein resides in the cytoplasm. The enzyme catalyses alpha-D-glucose 6-phosphate = beta-D-fructose 6-phosphate. It participates in carbohydrate biosynthesis; gluconeogenesis. It functions in the pathway carbohydrate degradation; glycolysis; D-glyceraldehyde 3-phosphate and glycerone phosphate from D-glucose: step 2/4. Catalyzes the reversible isomerization of glucose-6-phosphate to fructose-6-phosphate. The sequence is that of Glucose-6-phosphate isomerase from Pseudomonas fluorescens.